The following is a 725-amino-acid chain: Catalase-peroxidase (725 aa).

A cross-link (tryptophyl-tyrosyl-methioninium (Trp-Tyr) (with M-253)) is located at residues 99-227; sequence WHAAGTYRIA…LAAVMMGLIY (129 aa). Catalysis depends on His-100, which acts as the Proton acceptor. The segment at residues 227–253 is a cross-link (tryptophyl-tyrosyl-methioninium (Tyr-Met) (with W-99)); that stretch reads YVNPEGVDGNPDPLKTAHDIRITFSRM. His-268 contributes to the heme b binding site.

It belongs to the peroxidase family. Peroxidase/catalase subfamily. In terms of assembly, homodimer or homotetramer. Heme b is required as a cofactor. In terms of processing, formation of the three residue Trp-Tyr-Met cross-link is important for the catalase, but not the peroxidase activity of the enzyme.

It carries out the reaction H2O2 + AH2 = A + 2 H2O. The enzyme catalyses 2 H2O2 = O2 + 2 H2O. Its function is as follows. Bifunctional enzyme with both catalase and broad-spectrum peroxidase activity. The polypeptide is Catalase-peroxidase (Picosynechococcus sp. (strain ATCC 27264 / PCC 7002 / PR-6) (Agmenellum quadruplicatum)).